The following is a 1055-amino-acid chain: Focal adhesion kinase 1 (1055 aa).

The tract at residues Met1–Ser29 is disordered. Ala2 bears the N-acetylalanine mark. Phosphotyrosine is present on Tyr5. Over residues Leu10–Glu27 the composition is skewed to polar residues. Thr13 is subject to Phosphothreonine. Phosphoserine occurs at positions 29 and 54. The region spanning Arg35 to Thr355 is the FERM domain. Lys152 is covalently cross-linked (Glycyl lysine isopeptide (Lys-Gly) (interchain with G-Cter in SUMO)). Tyr397 is modified (phosphotyrosine; by autocatalysis). The residue at position 407 (Tyr407) is a Phosphotyrosine. Residues Ile422–Leu680 enclose the Protein kinase domain. ATP is bound by residues Ile428–Gly434, Lys454, and Glu500–Cys502. Residue Asp546 is the Proton acceptor of the active site. Phosphotyrosine is present on residues Tyr570 and Tyr576. Phosphotyrosine; by RET and SRC is present on Tyr577. Ser580 is subject to Phosphoserine. Residues Val685–Arg697 are compositionally biased toward basic and acidic residues. 2 disordered regions span residues Val685–Gln734 and Val837–Ser923. The interval Gly707–His1055 is interaction with TGFB1I1. At Ser722 the chain carries Phosphoserine. Ser732 bears the Phosphoserine; by CDK5 mark. The span at Val837–Gly849 shows a compositional bias: basic and acidic residues. Phosphoserine is present on Ser843. Tyr861 carries the post-translational modification Phosphotyrosine. Positions Pro869–Gly880 are enriched in pro residues. Over residues Ser886–Glu896 the composition is skewed to polar residues. Ser913 carries the post-translational modification Phosphoserine. The segment at Pro915–His1055 is interaction with ARHGEF28. Phosphothreonine is present on Thr917. At Tyr928 the chain carries Phosphotyrosine.

This sequence belongs to the protein kinase superfamily. Tyr protein kinase family. FAK subfamily. In terms of assembly, interacts with GIT1. Component of a complex that contains at least FER, CTTN and PTK2/FAK1. Interacts with BMX. Interacts with STEAP4. Interacts with ZFYVE21. Interacts with ESR1. Interacts with PIK3R1 or PIK3R2. Interacts with FGR, FLT4 and RET. Interacts with EPHA2 in resting cells; activation of EPHA2 recruits PTPN11, leading to dephosphorylation of PTK2/FAK1 and dissociation of the complex. Interacts with EPHA1 (kinase activity-dependent). Interacts with P53/TP53. Interacts (via first Pro-rich region) with CAS family members (via SH3 domain), including BCAR1, BCAR3, and CASS4. Interacts with NEDD9 (via SH3 domain). Interacts with TGFB1I1. Interacts with SRC, GRB2 and GRB7. Interacts with ARHGEF28. Interacts with SHB. Part of a complex composed of THSD1, PTK2/FAK1, TLN1 and VCL. Interacts with PXN and TLN1. Interacts with SORBS1. Interacts with STAT1. Interacts with WASL. Interacts with ARHGAP26 and SHC1. Interacts with RB1CC1; this inhibits PTK2/FAK1 activity and activation of downstream signaling pathways. Interacts with ARHGEF7. Interacts with MDM2. Interacts with PIAS1. Interacts with DCC. Interacts with LPXN (via LD motif 3). Interacts with MISP. Interacts with EMP2; regulates PTK2 activation and localization. Interacts with DSCAM. Interacts with AMBRA1. Interacts (when tyrosine-phosphorylated) with tensin TNS1; the interaction is increased by phosphorylation of TNS1. Post-translationally, phosphorylated on tyrosine residues upon activation, e.g. upon integrin signaling. Tyr-397 is the major autophosphorylation site, but other kinases can also phosphorylate this residue. Phosphorylation at Tyr-397 promotes interaction with SRC and SRC family members, leading to phosphorylation at Tyr-576, Tyr-577 and at additional tyrosine residues. FGR promotes phosphorylation at Tyr-397 and Tyr-576. FER promotes phosphorylation at Tyr-577, Tyr-861 and Tyr-928, even when cells are not adherent. Tyr-397, Tyr-576 and Ser-722 are phosphorylated only when cells are adherent. Phosphorylation at Tyr-397 is important for interaction with BMX, PIK3R1 and SHC1. Phosphorylation at Tyr-928 is important for interaction with GRB2. Dephosphorylated by PTPN11; PTPN11 is recruited to PTK2 via EPHA2 (tyrosine phosphorylated). Microtubule-induced dephosphorylation at Tyr-397 is crucial for the induction of focal adhesion disassembly; this dephosphorylation could be catalyzed by PTPN11 and regulated by ZFYVE21. Phosphorylation on tyrosine residues is enhanced by NTN1. Sumoylated; this enhances autophosphorylation.

It localises to the cell junction. The protein resides in the focal adhesion. Its subcellular location is the cell membrane. The protein localises to the cytoplasm. It is found in the perinuclear region. It localises to the cell cortex. The protein resides in the cytoskeleton. Its subcellular location is the microtubule organizing center. The protein localises to the centrosome. It is found in the nucleus. It localises to the cilium basal body. The catalysed reaction is L-tyrosyl-[protein] + ATP = O-phospho-L-tyrosyl-[protein] + ADP + H(+). Subject to autoinhibition, mediated by interactions between the FERM domain and the kinase domain. Activated by autophosphorylation at Tyr-397. This promotes interaction with SRC and phosphorylation at Tyr-576 and Tyr-577 in the kinase activation loop by SRC. Phosphorylation at Tyr-397, Tyr-576 and Tyr-577 is required for maximal kinase activity. Functionally, non-receptor protein-tyrosine kinase that plays an essential role in regulating cell migration, adhesion, spreading, reorganization of the actin cytoskeleton, formation and disassembly of focal adhesions and cell protrusions, cell cycle progression, cell proliferation and apoptosis. Required for early embryonic development and placenta development. Required for embryonic angiogenesis, normal cardiomyocyte migration and proliferation, and normal heart development. Regulates axon growth and neuronal cell migration, axon branching and synapse formation; required for normal development of the nervous system. Plays a role in osteogenesis and differentiation of osteoblasts. Functions in integrin signal transduction, but also in signaling downstream of numerous growth factor receptors, G-protein coupled receptors (GPCR), EPHA2, netrin receptors and LDL receptors. Forms multisubunit signaling complexes with SRC and SRC family members upon activation; this leads to the phosphorylation of additional tyrosine residues, creating binding sites for scaffold proteins, effectors and substrates. Regulates numerous signaling pathways. Promotes activation of phosphatidylinositol 3-kinase and the AKT1 signaling cascade. Promotes activation of MAPK1/ERK2, MAPK3/ERK1 and the MAP kinase signaling cascade. Promotes localized and transient activation of guanine nucleotide exchange factors (GEFs) and GTPase-activating proteins (GAPs), and thereby modulates the activity of Rho family GTPases. Signaling via CAS family members mediates activation of RAC1. Phosphorylates NEDD9 following integrin stimulation. Recruits the ubiquitin ligase MDM2 to P53/TP53 in the nucleus, and thereby regulates P53/TP53 activity, P53/TP53 ubiquitination and proteasomal degradation. Phosphorylates SRC; this increases SRC kinase activity. Phosphorylates ACTN1, ARHGEF7, GRB7, RET and WASL. Promotes phosphorylation of PXN and STAT1; most likely PXN and STAT1 are phosphorylated by a SRC family kinase that is recruited to autophosphorylated PTK2/FAK1, rather than by PTK2/FAK1 itself. Promotes phosphorylation of BCAR1; GIT2 and SHC1; this requires both SRC and PTK2/FAK1. Promotes phosphorylation of BMX and PIK3R1. Its function is as follows. Does not contain a kinase domain and inhibits PTK2/FAK1 phosphorylation and signaling. Its enhanced expression can attenuate the nuclear accumulation of LPXN and limit its ability to enhance serum response factor (SRF)-dependent gene transcription. The polypeptide is Focal adhesion kinase 1 (Rattus norvegicus (Rat)).